A 123-amino-acid polypeptide reads, in one-letter code: Small ribosomal subunit protein uS13 (123 aa).

The segment at 95-123 (GLPVRGQSSKTNARTRKGPRRSVMSRKKK) is disordered. A compositionally biased stretch (basic residues) spans 107 to 123 (ARTRKGPRRSVMSRKKK).

This sequence belongs to the universal ribosomal protein uS13 family. Part of the 30S ribosomal subunit. Forms a loose heterodimer with protein S19. Forms two bridges to the 50S subunit in the 70S ribosome.

Its function is as follows. Located at the top of the head of the 30S subunit, it contacts several helices of the 16S rRNA. In the 70S ribosome it contacts the 23S rRNA (bridge B1a) and protein L5 of the 50S subunit (bridge B1b), connecting the 2 subunits; these bridges are implicated in subunit movement. Contacts the tRNAs in the A and P-sites. The chain is Small ribosomal subunit protein uS13 from Maridesulfovibrio salexigens (strain ATCC 14822 / DSM 2638 / NCIMB 8403 / VKM B-1763) (Desulfovibrio salexigens).